An 85-amino-acid polypeptide reads, in one-letter code: Coiled-coil-helix-coiled-coil-helix domain-containing protein 7 (85 aa).

Positions 13-55 constitute a CHCH domain; sequence INPCLSESDASTRCLDENNYDKERCSTYFLKYKNCRKFWHSIM. 2 consecutive short sequence motifs (cx9C motif) follow at residues 16 to 26 and 37 to 47; these read CLSESDASTRC and CSTYFLKYKNC. Cystine bridges form between Cys16–Cys47 and Cys26–Cys37.

Belongs to the CHCHD7 family. Monomer.

It is found in the mitochondrion intermembrane space. This chain is Coiled-coil-helix-coiled-coil-helix domain-containing protein 7 (CHCHD7), found in Macaca fascicularis (Crab-eating macaque).